A 495-amino-acid chain; its full sequence is IQ domain-containing protein IQM5 (495 aa).

Residues 89–122 are disordered; the sequence is ENRGGEEEDERGSSPKRRNRGNLTALSLPAPTPF. The IQ domain maps to 131–160; that stretch reads LDAAAVTLQKVYKSYRTRRNLADCAVVVEE.

In terms of tissue distribution, expressed in roots, rosette and cauline leaves, and at lower levels in stems, flowers and siliques.

It localises to the cytoplasm. The protein localises to the nucleus. In terms of biological role, may be involved in biotic and abiotic stress responses. This chain is IQ domain-containing protein IQM5, found in Arabidopsis thaliana (Mouse-ear cress).